A 100-amino-acid polypeptide reads, in one-letter code: Aspartyl/glutamyl-tRNA(Asn/Gln) amidotransferase subunit C (100 aa).

This sequence belongs to the GatC family. As to quaternary structure, heterotrimer of A, B and C subunits.

It carries out the reaction L-glutamyl-tRNA(Gln) + L-glutamine + ATP + H2O = L-glutaminyl-tRNA(Gln) + L-glutamate + ADP + phosphate + H(+). It catalyses the reaction L-aspartyl-tRNA(Asn) + L-glutamine + ATP + H2O = L-asparaginyl-tRNA(Asn) + L-glutamate + ADP + phosphate + 2 H(+). Its function is as follows. Allows the formation of correctly charged Asn-tRNA(Asn) or Gln-tRNA(Gln) through the transamidation of misacylated Asp-tRNA(Asn) or Glu-tRNA(Gln) in organisms which lack either or both of asparaginyl-tRNA or glutaminyl-tRNA synthetases. The reaction takes place in the presence of glutamine and ATP through an activated phospho-Asp-tRNA(Asn) or phospho-Glu-tRNA(Gln). In Streptococcus pneumoniae (strain Taiwan19F-14), this protein is Aspartyl/glutamyl-tRNA(Asn/Gln) amidotransferase subunit C.